A 545-amino-acid chain; its full sequence is CTP synthase (545 aa).

Residues 1-266 (MTTNYIFVTG…DDYICKRFSL (266 aa)) are amidoligase domain. Position 14 (Ser-14) interacts with CTP. UTP is bound at residue Ser-14. Residues 15 to 20 (SLGKGI) and Asp-72 each bind ATP. Mg(2+)-binding residues include Asp-72 and Glu-140. Residues 147 to 149 (DIE), 187 to 192 (KTKPTQ), and Lys-223 each bind CTP. UTP-binding positions include 187-192 (KTKPTQ) and Lys-223. Residue 239–241 (KDV) coordinates ATP. Residues 291 to 542 (TIGMVGKYIE…VKAASEHQKR (252 aa)) form the Glutamine amidotransferase type-1 domain. Gly-352 serves as a coordination point for L-glutamine. Cys-379 functions as the Nucleophile; for glutamine hydrolysis in the catalytic mechanism. Residues 380 to 383 (LGMQ), Glu-403, and Arg-470 contribute to the L-glutamine site. Active-site residues include His-515 and Glu-517.

It belongs to the CTP synthase family. Homotetramer.

It carries out the reaction UTP + L-glutamine + ATP + H2O = CTP + L-glutamate + ADP + phosphate + 2 H(+). The enzyme catalyses L-glutamine + H2O = L-glutamate + NH4(+). It catalyses the reaction UTP + NH4(+) + ATP = CTP + ADP + phosphate + 2 H(+). Its pathway is pyrimidine metabolism; CTP biosynthesis via de novo pathway; CTP from UDP: step 2/2. With respect to regulation, allosterically activated by GTP, when glutamine is the substrate; GTP has no effect on the reaction when ammonia is the substrate. The allosteric effector GTP functions by stabilizing the protein conformation that binds the tetrahedral intermediate(s) formed during glutamine hydrolysis. Inhibited by the product CTP, via allosteric rather than competitive inhibition. In terms of biological role, catalyzes the ATP-dependent amination of UTP to CTP with either L-glutamine or ammonia as the source of nitrogen. Regulates intracellular CTP levels through interactions with the four ribonucleotide triphosphates. This Salmonella schwarzengrund (strain CVM19633) protein is CTP synthase.